A 569-amino-acid polypeptide reads, in one-letter code: 4-hydroxy-7-methoxy-3-oxo-3,4-dihydro-2H-1,4-benzoxazin-2-yl glucoside beta-D-glucosidase 1a, chloroplastic (569 aa).

The transit peptide at M1 to A50 directs the protein to the chloroplast. A beta-D-glucoside contacts are provided by residues Q92, H194, and N239–E240. Catalysis depends on E240, which acts as the Proton donor. An intrachain disulfide couples C259 to C265. A beta-D-glucoside is bound by residues Y383, E456, W504, E511 to W512, and F520. E456 acts as the Nucleophile in catalysis.

This sequence belongs to the glycosyl hydrolase 1 family. Homo- and heterohexamers. As to expression, expressed in young seedlings early after germination.

It is found in the plastid. It localises to the chloroplast. The enzyme catalyses Hydrolysis of terminal, non-reducing beta-D-glucosyl residues with release of beta-D-glucose.. The catalysed reaction is DIMBOA beta-D-glucoside + H2O = DIMBOA + D-glucose. It carries out the reaction DIBOA beta-D-glucoside + H2O = DIBOA + D-glucose. Acts in defense of young plant parts against pests via the production of hydroxamic acids from hydroxamic acid glucosides. Enzymatic activity is highly correlated with plant growth. The preferred substrate is DIMBOA-beta-D-glucoside. In Triticum aestivum (Wheat), this protein is 4-hydroxy-7-methoxy-3-oxo-3,4-dihydro-2H-1,4-benzoxazin-2-yl glucoside beta-D-glucosidase 1a, chloroplastic (GLU1A).